The primary structure comprises 338 residues: Ketol-acid reductoisomerase (NADP(+)) (338 aa).

Positions methionine 1–threonine 181 constitute a KARI N-terminal Rossmann domain. NADP(+) contacts are provided by residues tyrosine 24–glutamine 27, arginine 47, serine 50, serine 52, and aspartate 82–glutamine 85. The active site involves histidine 107. Glycine 133 lines the NADP(+) pocket. The region spanning threonine 182 to isoleucine 327 is the KARI C-terminal knotted domain. Residues aspartate 190, glutamate 194, glutamate 226, and glutamate 230 each coordinate Mg(2+). Serine 251 contributes to the substrate binding site.

The protein belongs to the ketol-acid reductoisomerase family. Mg(2+) is required as a cofactor.

The catalysed reaction is (2R)-2,3-dihydroxy-3-methylbutanoate + NADP(+) = (2S)-2-acetolactate + NADPH + H(+). It carries out the reaction (2R,3R)-2,3-dihydroxy-3-methylpentanoate + NADP(+) = (S)-2-ethyl-2-hydroxy-3-oxobutanoate + NADPH + H(+). It functions in the pathway amino-acid biosynthesis; L-isoleucine biosynthesis; L-isoleucine from 2-oxobutanoate: step 2/4. It participates in amino-acid biosynthesis; L-valine biosynthesis; L-valine from pyruvate: step 2/4. Involved in the biosynthesis of branched-chain amino acids (BCAA). Catalyzes an alkyl-migration followed by a ketol-acid reduction of (S)-2-acetolactate (S2AL) to yield (R)-2,3-dihydroxy-isovalerate. In the isomerase reaction, S2AL is rearranged via a Mg-dependent methyl migration to produce 3-hydroxy-3-methyl-2-ketobutyrate (HMKB). In the reductase reaction, this 2-ketoacid undergoes a metal-dependent reduction by NADPH to yield (R)-2,3-dihydroxy-isovalerate. The polypeptide is Ketol-acid reductoisomerase (NADP(+)) (Alcanivorax borkumensis (strain ATCC 700651 / DSM 11573 / NCIMB 13689 / SK2)).